We begin with the raw amino-acid sequence, 164 residues long: NAD(P)H-quinone oxidoreductase subunit I, chloroplastic (164 aa).

4Fe-4S ferredoxin-type domains lie at 55–84 (GRIHFEFDKCIACEVCVRVCPIDLPVVDWK) and 95–124 (LNYSIDFGICIFCGNCVEYCPTNCLSMTEE). The [4Fe-4S] cluster site is built by Cys64, Cys67, Cys70, Cys74, Cys104, Cys107, Cys110, and Cys114.

The protein belongs to the complex I 23 kDa subunit family. In terms of assembly, NDH is composed of at least 16 different subunits, 5 of which are encoded in the nucleus. [4Fe-4S] cluster is required as a cofactor.

The protein resides in the plastid. Its subcellular location is the chloroplast thylakoid membrane. It catalyses the reaction a plastoquinone + NADH + (n+1) H(+)(in) = a plastoquinol + NAD(+) + n H(+)(out). The catalysed reaction is a plastoquinone + NADPH + (n+1) H(+)(in) = a plastoquinol + NADP(+) + n H(+)(out). Functionally, NDH shuttles electrons from NAD(P)H:plastoquinone, via FMN and iron-sulfur (Fe-S) centers, to quinones in the photosynthetic chain and possibly in a chloroplast respiratory chain. The immediate electron acceptor for the enzyme in this species is believed to be plastoquinone. Couples the redox reaction to proton translocation, and thus conserves the redox energy in a proton gradient. The sequence is that of NAD(P)H-quinone oxidoreductase subunit I, chloroplastic from Daucus carota (Wild carrot).